A 195-amino-acid chain; its full sequence is GTP cyclohydrolase 1 (195 aa).

Residues Cys86, His89, and Cys158 each contribute to the Zn(2+) site.

It belongs to the GTP cyclohydrolase I family. Homomer.

It carries out the reaction GTP + H2O = 7,8-dihydroneopterin 3'-triphosphate + formate + H(+). It functions in the pathway cofactor biosynthesis; 7,8-dihydroneopterin triphosphate biosynthesis; 7,8-dihydroneopterin triphosphate from GTP: step 1/1. This Ruminiclostridium cellulolyticum (strain ATCC 35319 / DSM 5812 / JCM 6584 / H10) (Clostridium cellulolyticum) protein is GTP cyclohydrolase 1.